Reading from the N-terminus, the 445-residue chain is MALVDKHKVKRQRLDRICEGIRPQIMNGPLHPRPLVALLDGRDCTVEMPILKDLATVAFCDAQSTQEIHEKVLNEAVGAMMYHTITLTREDLEKFKALRVIVRIGSGYDNVDIKAAGELGIAVCNIPSAAVEETADSTICHILNLYRRNTWLYQALREGTRVQSVEQIREVASGAARIRGETLGLIGFGRTGQAVAVRAKAFGFSVIFYDPYLQDGIERSLGVQRVYTLQDLLYQSDCVSLHCNLNEHNHHLINDFTIKQMRQGAFLVNAARGGLVDEKALAQALKEGRIRGAALDVHESEPFSFAQGPLKDAPNLICTPHTAWYSEQASLEMREAAATEIRRAITGRIPESLRNCVNKEFFVTSAPWSVIDQQAIHPELNGATYRYPPGIVGVAPGGLPAAMEGIIPGGIPVTHNLPTVAHPSQAPSPNQPTKHGDNREHPNEQ.

At Arg22 the chain carries Asymmetric dimethylarginine. NAD(+)-binding positions include Ser106, 186-191 (IGFGRT), Asp210, 243-249 (CNLNEHN), 270-272 (AAR), and Asp296. Arg272 is an active-site residue. The active site involves Glu301. His321 functions as the Proton donor in the catalytic mechanism. 321 to 324 (HTAW) provides a ligand contact to NAD(+). Residues 414–445 (THNLPTVAHPSQAPSPNQPTKHGDNREHPNEQ) form a disordered region. Ser428 is modified (phosphoserine). Positions 434-445 (KHGDNREHPNEQ) are enriched in basic and acidic residues.

The protein belongs to the D-isomer specific 2-hydroxyacid dehydrogenase family. In terms of assembly, can form homodimers or heterodimers of CTBP1 and CTBP2. Interacts with HIPK2 and ZNF217. Interacts with PRDM16; represses white adipose tissue (WAT)-specific genes expression. Interacts with PNN, NRIP1 and WIZ. Interacts with MCRIP1. (Microbial infection) Interacts with human adenovirus 5 E1A protein; this interaction seems to potentiate viral replication. As to expression, ubiquitous. Highest levels in heart, skeletal muscle, and pancreas.

It is found in the nucleus. The protein resides in the synapse. Functionally, corepressor targeting diverse transcription regulators. Functions in brown adipose tissue (BAT) differentiation. Isoform 2 probably acts as a scaffold for specialized synapses. The chain is C-terminal-binding protein 2 (CTBP2) from Homo sapiens (Human).